Here is a 242-residue protein sequence, read N- to C-terminus: Tryptophan synthase alpha chain (242 aa).

Residues E32 and D43 each act as proton acceptor in the active site.

Belongs to the TrpA family. Tetramer of two alpha and two beta chains.

It is found in the plastid. The protein resides in the chloroplast. It catalyses the reaction (1S,2R)-1-C-(indol-3-yl)glycerol 3-phosphate + L-serine = D-glyceraldehyde 3-phosphate + L-tryptophan + H2O. It participates in amino-acid biosynthesis; L-tryptophan biosynthesis; L-tryptophan from chorismate: step 5/5. The alpha subunit is responsible for the aldol cleavage of indoleglycerol phosphate to indole and glyceraldehyde 3-phosphate. The protein is Tryptophan synthase alpha chain of Cyanidium caldarium (Red alga).